A 345-amino-acid polypeptide reads, in one-letter code: MAASNKIHLLKDLLILSRFNKYTPVFASFAGLWSTLLAGAARLAEHPSAISPAFVLRQTGLCFLAAYIFYGAGTVWNDWVDRDVDANVARTKDRPLASGKVTTFQAMLWMVLQTLATWYLLNVMLDGNDLYVLNPLHALMIAVHRIKNGRGTDGCTYRWKHFLPVLVASFLYPFGKRPAARKLYVYPQYILGFIVAWPAVIGWAATYGQHQPFTETVRQCLPLCSMVYFWIIYLNTAYSYQDVADDRKMNVNSFYNLGGQHLHLLLVALASPVPVCMLLFLREFDSFWLWATWLGGWTASFAEQLIHFDPKEPASGGTLHKSNFMLGIWTIFACAVELLRSASKV.

Transmembrane regions (helical) follow at residues 24 to 44, 60 to 80, 101 to 121, 183 to 203, 220 to 240, 261 to 281, 286 to 306, and 319 to 339; these read PVFA…ARLA, GLCF…NDWV, VTTF…WYLL, LYVY…VIGW, CLPL…AYSY, HLHL…LLFL, SFWL…EQLI, and LHKS…VELL.

Belongs to the UbiA prenyltransferase family. Requires Mg(2+) as cofactor.

It is found in the membrane. It functions in the pathway secondary metabolite biosynthesis; terpenoid biosynthesis. In terms of biological role, polyprenyl transferase; part of the gene cluster that mediates the biosynthesis of diterpenoid pyrones. The first step of the pathway is the synthesis of the alpha-pyrone moiety by the polyketide synthase dpmpA via condensation of one acetyl-CoA starter unit with 3 malonyl-CoA units and 2 methylations. The alpha-pyrone is then combined with geranylgeranyl pyrophosphate (GGPP) formed by the GGPP synthase dpmpD through the action of the prenyltransferase dpmpC to yield a linear alpha-pyrone diterpenoid. Subsequent steps in the diterpenoid pyrone biosynthetic pathway involve the decalin core formation, which is initiated by the epoxidation of the C10-C11 olefin by the FAD-dependent oxidoreductase dpmpE, and is followed by a cyclization cascade catalyzed by the terpene cyclase dpmpB. The short chain dehydrogenase/reductase dpmpG then oxidizes the 8S hydroxy group to a ketone and the short chain dehydrogenase/reductase dpmpH reduces the ketone to the 8R hydroxy group to yield higginsianin B. Higginsianin B is further methylated by the methyltransferase dpmpI to produce the intermediate named FDDP B. The cytochrome P450 monooxygenase dpmpJ then oxidizes the C-26 methyl to primary alcohol, producing the final diterpenoid pyrone with a C-26 primary alcohol on the gamma-pyrone moiety named FDDP C. This chain is Polyprenyl transferase dpmpC, found in Macrophomina phaseolina (strain MS6) (Charcoal rot fungus).